A 566-amino-acid chain; its full sequence is Protein pacG (566 aa).

A DNA-binding region (NDT80) is located at residues 79–326; it reads TSFDPPPPAE…RSPRNFQSRK (248 aa). Disordered regions lie at residues 314–422 and 448–470; these read VRGR…EAHR and DSRPHTSFSNDLASKSLSVDSGR. Residues 333 to 349 show a composition bias toward low complexity; it reads SAAASRKNAQAAAASNN. Composition is skewed to polar residues over residues 365-391, 403-413, and 452-466; these read VKSSSPETSSNGVPQQSPPNWALATNS, HSSVYSQSSPE, and HTSFSNDLASKSLSV.

The protein localises to the nucleus. It localises to the cytoplasm. Functionally, transcription factor that acts as a positive regulator of nonrepressible acid phosphatase activity. Is a major regulator of responses to nitrogen and carbon starvation and is essential for the expression of genes involved in vegetative incompatibility (like pin-c, het-6, and tol). Vegetative incompatibility is a non-self-recognition system ubiquitous in filamentous fungi which results in programmed cell death. The protein is Protein pacG (pacG) of Emericella nidulans (strain FGSC A4 / ATCC 38163 / CBS 112.46 / NRRL 194 / M139) (Aspergillus nidulans).